A 141-amino-acid chain; its full sequence is Hemoglobin subunit beta-C(NA) (141 aa).

The Globin domain maps to 1–141 (PBKALITGFW…VASALAHRYH (141 aa)). H58 and H87 together coordinate heme b.

Belongs to the globin family. Heterotetramer of two alpha chains and two beta chains. Red blood cells.

Functionally, involved in oxygen transport from the lung to the various peripheral tissues. This chain is Hemoglobin subunit beta-C(NA), found in Ammotragus lervia (Barbary sheep).